The chain runs to 131 residues: Interleukin-13 (131 aa).

A signal peptide spans Met1 to Ala18. N-linked (GlcNAc...) asparagine glycans are attached at residues Asn42, Asn52, and Asn75. 2 cysteine pairs are disulfide-bonded: Cys51–Cys79 and Cys67–Cys93.

It belongs to the IL-4/IL-13 family. In terms of assembly, interacts with IL13RA2.

Its subcellular location is the secreted. Cytokine that plays important roles in allergic inflammation and immune response to parasite infection. Synergizes with IL2 in regulating interferon-gamma synthesis. Stimulates B-cell proliferation, and activation of eosinophils, basophils, and mast cells. Plays an important role in controlling IL33 activity by modulating the production of transmembrane and soluble forms of interleukin-1 receptor-like 1/IL1RL1. Displays the capacity to antagonize Th1-driven proinflammatory immune response and downregulates synthesis of many proinflammatory cytokines including IL1, IL6, IL10, IL12 and TNF-alpha through a mechanism that partially involves suppression of NF-kappa-B. Also functions on nonhematopoietic cells, including endothelial cells where it induces vascular cell adhesion protein 1/VCAM1, which is important in the recruitment of eosinophils. Exerts its biological effects through its receptors which comprises the IL4R chain and the IL13RA1 chain, to activate JAK1 and TYK2, leading to the activation of STAT6. Aside from IL13RA1, another receptor IL13RA2 acts as a high affinity decoy for IL13 and mediates internalization and depletion of extracellular IL13. The sequence is that of Interleukin-13 (Il13) from Mus musculus (Mouse).